The primary structure comprises 314 residues: Olfactory receptor 51G2 (314 aa).

At 1-30 the chain is on the extracellular side; the sequence is MTLGSLGNSSSSVSATFLLSGIPGLERMHI. Residue N8 is glycosylated (N-linked (GlcNAc...) asparagine). The helical transmembrane segment at 31–51 threads the bilayer; it reads WISIPLCFMYLVSIPGNCTIL. The Cytoplasmic segment spans residues 52-59; that stretch reads FIIKTERS. A helical membrane pass occupies residues 60–80; sequence LHEPMYLFLSMLALIDLGLSL. Topologically, residues 81–104 are extracellular; that stretch reads CTLPTVLGIFWVGAREISHDACFA. C102 and C194 are joined by a disulfide. Residues 105 to 125 traverse the membrane as a helical segment; the sequence is QLFFIHCFSFLESSVLLSMAF. Residues 126 to 144 are Cytoplasmic-facing; sequence DRFVAICHPLHYVSILTNT. Residues 145 to 165 form a helical membrane-spanning segment; the sequence is VIGRIGLVSLGRSVALIFPLP. The Extracellular segment spans residues 166 to 201; the sequence is FMLKRFPYCGSPVLSHSYCLHQEVMKLACADMKANS. A helical transmembrane segment spans residues 202 to 222; sequence IYGMFVIVSTVGIDSLLILFS. The Cytoplasmic segment spans residues 223–242; sequence YALILRTVLSIASRAERFKA. The helical transmembrane segment at 243 to 263 threads the bilayer; sequence LNTCVSHICAVLLFYTPMIGL. Residues 264–278 lie on the Extracellular side of the membrane; it reads SVIHRFGKQAPHLVQ. The helical transmembrane segment at 279 to 299 threads the bilayer; sequence VVMGFMYLLFPPVMNPIVYSV. At 300-314 the chain is on the cytoplasmic side; it reads KTKQIRDRVTHAFCY.

It belongs to the G-protein coupled receptor 1 family.

The protein localises to the cell membrane. Its function is as follows. Odorant receptor. In Homo sapiens (Human), this protein is Olfactory receptor 51G2 (OR51G2).